The chain runs to 330 residues: Virulence plasmid integrase pGP8-D (330 aa).

Residues 39–124 (FSLFEVIMHW…SYISLTRFLN (86 aa)) form the Core-binding (CB) domain. The Tyr recombinase domain occupies 152–327 (VKTDAMNSLQ…SREDNASKKM (176 aa)). Residues R189, K214, H279, R282, and H305 contribute to the active site. The active-site O-(3'-phospho-DNA)-tyrosine intermediate is Y314.

The protein belongs to the 'phage' integrase family.

This Chlamydia trachomatis serovar L2 (strain ATCC VR-902B / DSM 19102 / 434/Bu) protein is Virulence plasmid integrase pGP8-D.